The chain runs to 233 residues: Octanoyltransferase (233 aa).

The 184-residue stretch at 33–216 (GRAQDTVILL…HLVRALSSNG (184 aa)) folds into the BPL/LPL catalytic domain. Residues 71–78 (RGGRITWH), 146–148 (AIG), and 159–161 (GFA) each bind substrate. Cys177 acts as the Acyl-thioester intermediate in catalysis.

The protein belongs to the LipB family.

It is found in the cytoplasm. It catalyses the reaction octanoyl-[ACP] + L-lysyl-[protein] = N(6)-octanoyl-L-lysyl-[protein] + holo-[ACP] + H(+). Its pathway is protein modification; protein lipoylation via endogenous pathway; protein N(6)-(lipoyl)lysine from octanoyl-[acyl-carrier-protein]: step 1/2. Its function is as follows. Catalyzes the transfer of endogenously produced octanoic acid from octanoyl-acyl-carrier-protein onto the lipoyl domains of lipoate-dependent enzymes. Lipoyl-ACP can also act as a substrate although octanoyl-ACP is likely to be the physiological substrate. The sequence is that of Octanoyltransferase from Clavibacter michiganensis subsp. michiganensis (strain NCPPB 382).